We begin with the raw amino-acid sequence, 1278 residues long: Alpha-glucan water dikinase 2 (1278 aa).

The N-terminal stretch at 1–23 (MATSKSQQFQLIEGMELQITVTG) is a signal peptide. Residue His886 is the Tele-phosphohistidine intermediate of the active site.

Belongs to the PEP-utilizing enzyme family. In terms of assembly, homodimer. The cofactor is Mg(2+).

The catalysed reaction is [(1-&gt;4)-alpha-D-glucosyl](n) + n ATP + n H2O = [(1-&gt;4)-6-phospho-alpha-D-glucosyl](n) + n AMP + n phosphate + 2n H(+). Its function is as follows. Mediates the incorporation of phosphate into alpha-glucan, mostly at the C-6 position of glucose units. This is Alpha-glucan water dikinase 2 (GWD2) from Arabidopsis thaliana (Mouse-ear cress).